The sequence spans 968 residues: AP2-associated protein kinase 1 (968 aa).

Met-1 is modified (N-acetylmethionine). A compositionally biased stretch (basic and acidic residues) spans Met-1–Gln-11. The tract at residues Met-1–Gly-25 is disordered. A compositionally biased stretch (gly residues) spans Gly-12–Gly-25. Position 14 is a phosphoserine (Ser-14). The region spanning Val-46 to Leu-315 is the Protein kinase domain. ATP contacts are provided by residues Leu-52–Val-60 and Lys-74. The Proton acceptor role is filled by Asp-176. A Phosphotyrosine modification is found at Tyr-234. A Phosphoserine modification is found at Ser-235. 2 disordered regions span residues Ser-327–Pro-485 and Ile-578–Arg-640. Residues Thr-354 and Thr-389 each carry the phosphothreonine modification. Arg-391 carries the omega-N-methylarginine modification. A compositionally biased stretch (pro residues) spans Gln-437–Ala-448. Composition is skewed to low complexity over residues Pro-449 to Gln-472 and Ile-578 to Ser-589. A Phosphothreonine modification is found at Thr-613. Ser-625 carries the phosphoserine modification. Residue Thr-627 is modified to Phosphothreonine. 4 positions are modified to phosphoserine: Ser-630, Ser-631, Ser-644, and Ser-657. At Thr-660 the chain carries Phosphothreonine. The segment at Ser-671–Asp-708 is disordered. The segment covering Thr-679–Asn-703 has biased composition (polar residues). Tyr-694 is subject to Phosphotyrosine. Residues Ser-738, Ser-853, Ser-944, and Ser-945 each carry the phosphoserine modification. The interval Glu-830 to Asp-967 is clathrin-binding domain (CBD). Disordered stretches follow at residues Leu-843–Arg-862 and Pro-929–Leu-952. The span at Leu-851 to Arg-862 shows a compositional bias: polar residues. Over residues Gly-938–Ser-951 the composition is skewed to low complexity.

Belongs to the protein kinase superfamily. Ser/Thr protein kinase family. Interacts (via CBD domain) with clathrin. Interacts with AP-2 complex. Interacts with NUMB. Interacts with alpha-adaptin. Interacts with EPS15. Interacts with membrane-bound activated NOTCH1 but not with the inactive full-length form of NOTCH1. Preferentially interacts with monoubiquitinated activated NOTCH1 compared to the non-ubiquitinated form. In terms of processing, autophosphorylated.

The protein localises to the cell membrane. Its subcellular location is the membrane. It is found in the clathrin-coated pit. The protein resides in the presynapse. It carries out the reaction L-seryl-[protein] + ATP = O-phospho-L-seryl-[protein] + ADP + H(+). It catalyses the reaction L-threonyl-[protein] + ATP = O-phospho-L-threonyl-[protein] + ADP + H(+). Its activity is regulated as follows. Stimulated by clathrin. In terms of biological role, regulates clathrin-mediated endocytosis by phosphorylating the AP2M1/mu2 subunit of the adaptor protein complex 2 (AP-2) which ensures high affinity binding of AP-2 to cargo membrane proteins during the initial stages of endocytosis. Preferentially, may phosphorylate substrates on threonine residues. Regulates phosphorylation of other AP-2 subunits as well as AP-2 localization and AP-2-mediated internalization of ligand complexes. Phosphorylates NUMB and regulates its cellular localization, promoting NUMB localization to endosomes. Binds to and stabilizes the activated form of NOTCH1, increases its localization in endosomes and regulates its transcriptional activity. This Sus scrofa (Pig) protein is AP2-associated protein kinase 1 (AAK1).